The following is a 125-amino-acid chain: MDKQVRNTTEIVRLAKQKSKKTREKVDKAISKFSIEGKVINFNSIAKEANVSKSWLYKEHDIRQRIESLRERQITANVVSKPKKSSRSEEILIKTLKRRVMELEKENKKLQNQIQKLYGDLYNKE.

Its function is as follows. One of three proteins encoded by transposon Tn554 required for its transposition. The chain is Transposase for transposon Tn554 (tnpC1) from Staphylococcus aureus (strain Mu50 / ATCC 700699).